Consider the following 121-residue polypeptide: Ribonuclease P protein component (121 aa).

The protein belongs to the RnpA family. As to quaternary structure, consists of a catalytic RNA component (M1 or rnpB) and a protein subunit.

The catalysed reaction is Endonucleolytic cleavage of RNA, removing 5'-extranucleotides from tRNA precursor.. RNaseP catalyzes the removal of the 5'-leader sequence from pre-tRNA to produce the mature 5'-terminus. It can also cleave other RNA substrates such as 4.5S RNA. The protein component plays an auxiliary but essential role in vivo by binding to the 5'-leader sequence and broadening the substrate specificity of the ribozyme. In Desulfosudis oleivorans (strain DSM 6200 / JCM 39069 / Hxd3) (Desulfococcus oleovorans), this protein is Ribonuclease P protein component.